The following is a 102-amino-acid chain: Putative UPF0320 protein YMR326C (102 aa).

It belongs to the UPF0320 family.

In Saccharomyces cerevisiae (strain ATCC 204508 / S288c) (Baker's yeast), this protein is Putative UPF0320 protein YMR326C.